The primary structure comprises 380 residues: Glucose-1-phosphate adenylyltransferase (380 aa).

Alpha-D-glucose 1-phosphate-binding positions include G164, 179–180 (EK), and S190.

The protein belongs to the bacterial/plant glucose-1-phosphate adenylyltransferase family. In terms of assembly, homotetramer.

It carries out the reaction alpha-D-glucose 1-phosphate + ATP + H(+) = ADP-alpha-D-glucose + diphosphate. It functions in the pathway glycan biosynthesis; glycogen biosynthesis. Its function is as follows. Involved in the biosynthesis of ADP-glucose, a building block required for the elongation reactions to produce glycogen. Catalyzes the reaction between ATP and alpha-D-glucose 1-phosphate (G1P) to produce pyrophosphate and ADP-Glc. This Streptococcus gordonii (strain Challis / ATCC 35105 / BCRC 15272 / CH1 / DL1 / V288) protein is Glucose-1-phosphate adenylyltransferase.